We begin with the raw amino-acid sequence, 89 residues long: Dynein light chain (89 aa).

This sequence belongs to the dynein light chain family. Tegument.

The protein localises to the cytoplasm. Its subcellular location is the cytoskeleton. Functionally, acts as a non-catalytic accessory component of a dynein complex. The polypeptide is Dynein light chain (DLC) (Schistosoma mansoni (Blood fluke)).